The primary structure comprises 91 residues: Acylphosphatase (91 aa).

An Acylphosphatase-like domain is found at 3-91 (TVTMRVTGLV…EKFTRFSVVY (89 aa)). Active-site residues include R18 and N36.

It belongs to the acylphosphatase family.

It catalyses the reaction an acyl phosphate + H2O = a carboxylate + phosphate + H(+). This chain is Acylphosphatase (acyP), found in Lactobacillus johnsonii (strain CNCM I-12250 / La1 / NCC 533).